The primary structure comprises 481 residues: Aromatic amino acid aminotransferase DDB_G0272014 (481 aa).

The residue at position 300 (lysine 300) is an N6-(pyridoxal phosphate)lysine.

This sequence belongs to the class-I pyridoxal-phosphate-dependent aminotransferase family. Pyridoxal 5'-phosphate is required as a cofactor.

It localises to the cytoplasm. It catalyses the reaction an aromatic L-alpha-amino acid + 2-oxoglutarate = an aromatic oxo-acid + L-glutamate. Has aromatic amino acid transaminase activity. This Dictyostelium discoideum (Social amoeba) protein is Aromatic amino acid aminotransferase DDB_G0272014.